A 72-amino-acid chain; its full sequence is Gene 83 protein (72 aa).

The polypeptide is Gene 83 protein (83) (Mycobacterium phage L5 (Mycobacteriophage L5)).